We begin with the raw amino-acid sequence, 308 residues long: Isoflavone reductase-like protein (308 aa).

NADP(+) contacts are provided by residues 11–17 (GGTGYIG), R36, and K45. The active-site Proton acceptor is K133. R137 provides a ligand contact to NADP(+).

The protein belongs to the NmrA-type oxidoreductase family. Isoflavone reductase subfamily. In terms of assembly, homodimer.

It is found in the cytoplasm. The polypeptide is Isoflavone reductase-like protein (Olea europaea (Common olive)).